The chain runs to 1002 residues: UPF0182 protein alr1037 (1002 aa).

Transmembrane regions (helical) follow at residues 7 to 29 (FRLS…LGAE), 49 to 71 (RGVL…LALA), 123 to 145 (LRWL…VHYG), 178 to 200 (QVFS…LIYS), 202 to 224 (FFLR…YNWA), 258 to 280 (LLEL…TYLL), 300 to 319 (HLYG…YWLS), 339 to 361 (VVVQ…FYLL), and 382 to 404 (GAYL…YLIV).

Belongs to the UPF0182 family.

Its subcellular location is the cell membrane. The protein is UPF0182 protein alr1037 of Nostoc sp. (strain PCC 7120 / SAG 25.82 / UTEX 2576).